We begin with the raw amino-acid sequence, 331 residues long: Olfactory receptor 6B3 (331 aa).

Over 1 to 25 (MSGENVTRVGTFILVGFPTAPGLQY) the chain is Extracellular. Asn5 is a glycosylation site (N-linked (GlcNAc...) asparagine). Residues 26-46 (LLFLLFLLTYLFVLVENLAII) traverse the membrane as a helical segment. The Cytoplasmic portion of the chain corresponds to 47-54 (LTVWSSTS). The chain crosses the membrane as a helical span at residues 55–75 (LHRPMYYFLSSMSFLEIWYVS). Over 76–99 (DITPKMLEGFLLQQKRISFVGCMT) the chain is Extracellular. Cys97 and Cys189 are joined by a disulfide. The helical transmembrane segment at 100 to 120 (QLYFFSSLVCTECVLLASMAY) threads the bilayer. Topologically, residues 121 to 139 (DRYVAICHPLRYHVLVTPG) are cytoplasmic. Residues 140–160 (LCLQLVGFSFVSGFTISMIKV) traverse the membrane as a helical segment. Over 161 to 196 (CFISSVTFCGSNVLNHFFCDISPILKLACTDFSTAE) the chain is Extracellular. A helical transmembrane segment spans residues 197–217 (LVDFILAFIILVFPLLATMLS). At 218-237 (YAHITLAVLRIPSATGCWRA) the chain is on the cytoplasmic side. The chain crosses the membrane as a helical span at residues 238–258 (FFTCASHLTVVTVFYTALLFM). At 259 to 271 (YVRPQAIDSRSSN) the chain is on the extracellular side. Residues 272 to 292 (KLISVLYTVITPILNPLIYCL) form a helical membrane-spanning segment. The Cytoplasmic segment spans residues 293–331 (RNKEFKNALKKAFGLTSCAVEGRLSSLLELHLQIHSQPL).

It belongs to the G-protein coupled receptor 1 family.

The protein resides in the cell membrane. Functionally, odorant receptor. The protein is Olfactory receptor 6B3 (OR6B3) of Homo sapiens (Human).